Here is a 72-residue protein sequence, read N- to C-terminus: MSPLAFVISLPIRFYRKFLGPLLPKVCRFHPSCSTYAMEALEKHGGLKGSWLTLWRLVRCQPFHPGGIDPVP.

The protein belongs to the UPF0161 family.

The protein localises to the cell inner membrane. In terms of biological role, could be involved in insertion of integral membrane proteins into the membrane. This is Putative membrane protein insertion efficiency factor from Myxococcus xanthus (strain DK1622).